A 385-amino-acid polypeptide reads, in one-letter code: uncharacterized protein (385 aa).

8 helical membrane passes run 17–37 (ILII…FIFT), 72–92 (TELM…WFLL), 107–127 (WILK…KCIT), 155–175 (ICLI…FYII), 191–211 (WIQA…LVLL), 295–315 (AFPS…FYFL), 326–346 (ITLL…IVVN), and 354–374 (ITFT…FNSF).

It is found in the membrane. This is an uncharacterized protein from Mycoplasma capricolum subsp. capricolum (strain California kid / ATCC 27343 / NCTC 10154).